The following is an 88-amino-acid chain: Large ribosomal subunit protein bL27 (88 aa).

Positions 1 to 21 (MAHKKGASSSRNGRDSAAQRL) are disordered.

This sequence belongs to the bacterial ribosomal protein bL27 family.

The sequence is that of Large ribosomal subunit protein bL27 from Mycobacterium sp. (strain MCS).